We begin with the raw amino-acid sequence, 709 residues long: Pentatricopeptide repeat-containing protein At5g42310, chloroplastic (709 aa).

A chloroplast-targeting transit peptide spans 1–54; that stretch reads MLLLQQPPLVSTRFHSLYFLTHHHHHHHRFFQPPISAFSATTSASLPSPSPSSS. PPR repeat units lie at residues 196–230, 231–267, 268–302, 303–337, 338–372, 373–407, 408–442, 443–477, 478–512, 513–547, 548–582, 583–617, 618–652, and 653–687; these read TPLT…GYQS, DFVN…KLEL, DVQL…GLSA, KTAT…GIKP, RTRA…GVSP, DEHT…DVQP, NSFV…GVKP, DRQF…GIEP, DRVT…GCLP, CATT…GILP, NVVT…GLKP, SSTM…GLKP, SLLA…GVKP, and DVVT…GCKP.

Belongs to the PPR family. P subfamily. Interacts with PDE338.

Its subcellular location is the plastid. It localises to the chloroplast stroma. It is found in the chloroplast thylakoid. The protein resides in the chloroplast. Its function is as follows. Required for chloroplast protein synthesis and accumulation of subunits of the thylakoid protein complexes. Activates psaC and petA translation by binding their 5'-UTRs. Required for the correct processing of petB and petD mRNAs. Interacts with the petB and petD intergenic region and is required for the generation of petB and petD monocistronic RNAs. This is Pentatricopeptide repeat-containing protein At5g42310, chloroplastic from Arabidopsis thaliana (Mouse-ear cress).